We begin with the raw amino-acid sequence, 268 residues long: Putative type I specificity subunit S.MpnORF365P (268 aa).

This sequence belongs to the type-I restriction system S methylase family. As to quaternary structure, the methyltransferase is composed of M and S polypeptides.

In terms of biological role, the specificity (S) subunit of a type I methyltransferase (MTase); this subunit dictates DNA sequence specificity. The single R subunit has multiple frameshifts and is probably not expressed. This chain is Putative type I specificity subunit S.MpnORF365P, found in Mycoplasma pneumoniae (strain ATCC 29342 / M129 / Subtype 1) (Mycoplasmoides pneumoniae).